We begin with the raw amino-acid sequence, 951 residues long: MEKTYNPQDIEQPLYEHWEKQGYFKPNGDESKESFCIMIPPPNVTGSLHMGHAFQQTIMDTMIRYQRMQGKNTLWQVGTDHAGIATQMVVERKIAAEEGKTRHDYGRDAFIDKIWQWKAESGGTITRQMRRLGNSVDWERERFTMDEGLSNAVKEVFVRLYKEDLIYRGKRLVNWDPKLRTAISDLEVENRESKGSMWHIRYPLADGAKTADGKDYLVVATTRPETVLGDTGVAVNPEDPRYKDLIGKFVILPLVNRRIPIVGDEHADMEKGTGCVKITPAHDFNDYEVGKRHALPMINILTFDGDIRESAEVFDTKGEESNVYSSEIPAEFQKLERFAARKAIVAAVDALGLLEEIKPHDLTVPYGDRGGVVIEPMLTDQWYVRADVLAKPAVEAVENGDIQFVPKQYENMYFSWMRDIQDWCISRQLWWGHRIPAWYGNDGNVYVGRTEDEVRQENNLGADVQLRQDEDVLDTWFSSALWTFSTLGWPENTDALRQFHPTSVMVSGFDIIFFWIARMIMMTMHFIKDENGKPQVPFHTVYMTGLIRDDEGQKMSKSKGNVIDPLDMVDGISLPELLEKRTGNMMQPQMAEKIRKRTEKQFPNGIEPHGTDALRFTLAALASTGRDINWDMKRLEGYRNFCNKLWNASRFVLMNTEEQDCGFNGGEMTLSLADRWILAEFNQTVKAYREALDNFRFDIAAGILYEFTWNQFCDWYLELTKPVMTGGSESELRGTRHTLVTVLEGLLRLAHPIIPFITETIWQRVKVICGITADTIMLQPFPEYNAAQVDEAALADTEWLKQAIVAVRNIRAEMNIAPGKPLELLLRGCSEEAVRRVNDNRSFLLNLARLESITVLPADDKGPVSVTKIIDGAELLIPMAGLINKEDELARLAKEVAKIEGEIARIEGKLSNEGFVARAPEAVIAKEREKLDGYAEAKAKLIEQQAVISAL.

A 'HIGH' region motif is present at residues 42–52; sequence PNVTGSLHMGH. The 'KMSKS' region signature appears at 554–558; the sequence is KMSKS. Lys-557 serves as a coordination point for ATP. A coiled-coil region spans residues 880 to 944; it reads AGLINKEDEL…AEAKAKLIEQ (65 aa).

The protein belongs to the class-I aminoacyl-tRNA synthetase family. ValS type 1 subfamily. Monomer.

The protein resides in the cytoplasm. It catalyses the reaction tRNA(Val) + L-valine + ATP = L-valyl-tRNA(Val) + AMP + diphosphate. Functionally, catalyzes the attachment of valine to tRNA(Val). As ValRS can inadvertently accommodate and process structurally similar amino acids such as threonine, to avoid such errors, it has a 'posttransfer' editing activity that hydrolyzes mischarged Thr-tRNA(Val) in a tRNA-dependent manner. The polypeptide is Valine--tRNA ligase (Salmonella paratyphi A (strain ATCC 9150 / SARB42)).